We begin with the raw amino-acid sequence, 185 residues long: Crossover junction endodeoxyribonuclease RuvC (185 aa).

Active-site residues include D16, E75, and D147. Mg(2+)-binding residues include D16, E75, and D147.

Belongs to the RuvC family. Homodimer which binds Holliday junction (HJ) DNA. The HJ becomes 2-fold symmetrical on binding to RuvC with unstacked arms; it has a different conformation from HJ DNA in complex with RuvA. In the full resolvosome a probable DNA-RuvA(4)-RuvB(12)-RuvC(2) complex forms which resolves the HJ. Requires Mg(2+) as cofactor.

Its subcellular location is the cytoplasm. The enzyme catalyses Endonucleolytic cleavage at a junction such as a reciprocal single-stranded crossover between two homologous DNA duplexes (Holliday junction).. The RuvA-RuvB-RuvC complex processes Holliday junction (HJ) DNA during genetic recombination and DNA repair. Endonuclease that resolves HJ intermediates. Cleaves cruciform DNA by making single-stranded nicks across the HJ at symmetrical positions within the homologous arms, yielding a 5'-phosphate and a 3'-hydroxyl group; requires a central core of homology in the junction. The consensus cleavage sequence is 5'-(A/T)TT(C/G)-3'. Cleavage occurs on the 3'-side of the TT dinucleotide at the point of strand exchange. HJ branch migration catalyzed by RuvA-RuvB allows RuvC to scan DNA until it finds its consensus sequence, where it cleaves and resolves the cruciform DNA. This Aromatoleum aromaticum (strain DSM 19018 / LMG 30748 / EbN1) (Azoarcus sp. (strain EbN1)) protein is Crossover junction endodeoxyribonuclease RuvC.